A 419-amino-acid polypeptide reads, in one-letter code: L-rhamnose isomerase (419 aa).

Mn(2+) is bound by residues His-262, Asp-294, and Asp-296.

This sequence belongs to the rhamnose isomerase family. In terms of assembly, homotetramer. Mn(2+) serves as cofactor.

It is found in the cytoplasm. The enzyme catalyses L-rhamnopyranose = L-rhamnulose. It participates in carbohydrate degradation; L-rhamnose degradation; glycerone phosphate from L-rhamnose: step 1/3. Functionally, catalyzes the interconversion of L-rhamnose and L-rhamnulose. This Salmonella typhi protein is L-rhamnose isomerase.